The primary structure comprises 144 residues: Peptide methionine sulfoxide reductase MsrB (144 aa).

Residues 5 to 128 (KEELRQRIGE…NSAALQFIPV (124 aa)) enclose the MsrB domain. The active-site Nucleophile is the cysteine 117.

This sequence belongs to the MsrB Met sulfoxide reductase family.

It catalyses the reaction L-methionyl-[protein] + [thioredoxin]-disulfide + H2O = L-methionyl-(R)-S-oxide-[protein] + [thioredoxin]-dithiol. In Ligilactobacillus salivarius (strain UCC118) (Lactobacillus salivarius), this protein is Peptide methionine sulfoxide reductase MsrB.